We begin with the raw amino-acid sequence, 59 residues long: uncharacterized protein (59 aa).

2 helical membrane passes run methionine 1–isoleucine 21 and glycine 30–tyrosine 50.

The protein resides in the cell membrane. This is an uncharacterized protein from Bacillus subtilis (strain 168).